We begin with the raw amino-acid sequence, 610 residues long: Methionine--tRNA ligase (610 aa).

Residues 12–22 carry the 'HIGH' region motif; sequence PYANGPRHIGH. 4 residues coordinate Zn(2+): Cys-144, Cys-147, Cys-157, and Cys-160. The 'KMSKS' region motif lies at 348 to 352; it reads KFSSS. Residue Ser-351 participates in ATP binding.

The protein belongs to the class-I aminoacyl-tRNA synthetase family. MetG type 1 subfamily. Monomer. Requires Zn(2+) as cofactor.

It is found in the cytoplasm. The catalysed reaction is tRNA(Met) + L-methionine + ATP = L-methionyl-tRNA(Met) + AMP + diphosphate. In terms of biological role, is required not only for elongation of protein synthesis but also for the initiation of all mRNA translation through initiator tRNA(fMet) aminoacylation. This Corynebacterium diphtheriae (strain ATCC 700971 / NCTC 13129 / Biotype gravis) protein is Methionine--tRNA ligase.